Reading from the N-terminus, the 889-residue chain is MNKITPMMQQYLEIKEKYPDALLLYRMGDFYEMFMDDAVTASGLLEIALTSRDRQSEVRIPMCGVPYHAAEGYIARLVSAGKKVAICDQVEDPRKAKGLVRREVTRVITPGLVLDAQNLAAKQPNYLAAVSNSTAGERFGLAFLDVSTAEFKMVEIESREALLEELIRVSPRELLLSDDDEHPWAEELPKLYGIALTPLGADRFDGKRAEEALVGHFRVHSLEGFGISGMDLGIRAAGAILAYMQANLLGSCDHITRLLPYSRGDFMIVDEAGVRNLEIFHSQSFQGRKGSLIDILDETKTAMGGRKLQQWLRYPLLDLARINNRREAIAELAANAPMRGETLGLLSRISDVERLNGRNSTGTSTPRDLVALKKSLQNLPALGAALAELTSPRLSELRARWDDLADVADIIERTLLDPPPPGLAAGGVISAGVSEELDHFVRLSRDAKGWMADYEVQQRRDTGISSLKVRYNKVFGYYIEISNANLNSVPEHYFRKQTLVNAERFITEELKTFETQVLQAEEKRLELEQQIFADLRARIAREAGRIQAAADRIADLDCVSALAEVACRYDYCRPVMDESDAIRIRDGRHPVIEHYLKDGTFVPNDLDMDQRDQQVLVITGPNMAGKSTILRQAALIVLMGHIGSFVPASEAHIGLVDRIFTRVGASDDLARGRSTFMVEMQETANILHHATPRSLIILDEIGRGTSTYDGLSIAWAVAEHLHDFQEKGIKTLFATHYHELTELARSRPRVRNFNVAIREWQQEILFFHKLVQGGASRSYGIQVARLAGLPEEVTGRAREILQQLESGHAPFAAAPSGAARRGRPAREKEPGIQMSLFQRSPEWLRDRILALDLDNMTPIAALQNLHALKEQIRGSAGEEPASCASRGKR.

Residue 620 to 627 (GPNMAGKS) participates in ATP binding. Residues 812–831 (AAAPSGAARRGRPAREKEPG) form a disordered region.

The protein belongs to the DNA mismatch repair MutS family.

This protein is involved in the repair of mismatches in DNA. It is possible that it carries out the mismatch recognition step. This protein has a weak ATPase activity. The polypeptide is DNA mismatch repair protein MutS (Syntrophobacter fumaroxidans (strain DSM 10017 / MPOB)).